A 658-amino-acid chain; its full sequence is tRNA 5-methylaminomethyl-2-thiouridine biosynthesis bifunctional protein MnmC (658 aa).

The tract at residues 1–236 (MIPELPHAQL…KWEVLRGEFL (236 aa)) is tRNA (mnm(5)s(2)U34)-methyltransferase. Residues 265–658 (IGGGLAGCAS…ALRRLIRGKA (394 aa)) form an FAD-dependent cmnm(5)s(2)U34 oxidoreductase region.

This sequence in the N-terminal section; belongs to the methyltransferase superfamily. tRNA (mnm(5)s(2)U34)-methyltransferase family. In the C-terminal section; belongs to the DAO family. FAD serves as cofactor.

Its subcellular location is the cytoplasm. The enzyme catalyses 5-aminomethyl-2-thiouridine(34) in tRNA + S-adenosyl-L-methionine = 5-methylaminomethyl-2-thiouridine(34) in tRNA + S-adenosyl-L-homocysteine + H(+). In terms of biological role, catalyzes the last two steps in the biosynthesis of 5-methylaminomethyl-2-thiouridine (mnm(5)s(2)U) at the wobble position (U34) in tRNA. Catalyzes the FAD-dependent demodification of cmnm(5)s(2)U34 to nm(5)s(2)U34, followed by the transfer of a methyl group from S-adenosyl-L-methionine to nm(5)s(2)U34, to form mnm(5)s(2)U34. The sequence is that of tRNA 5-methylaminomethyl-2-thiouridine biosynthesis bifunctional protein MnmC from Pseudomonas fluorescens (strain ATCC BAA-477 / NRRL B-23932 / Pf-5).